The sequence spans 333 residues: Torsin-1A (333 aa).

Positions 1–20 (MKLGRATLALLLLVPCVVRA) are cleaved as a signal peptide. The interval 92–252 (KPKKPLTLSL…VSVFNNKNSG (161 aa)) is interaction with SNAPIN. Residues Asn-144 and Asn-159 are each glycosylated (N-linked (GlcNAc...) asparagine). The tract at residues 252–333 (GFWHSSLIDR…FTKLDYYLDD (82 aa)) is interaction with KLC1. Residues 313 to 333 (KVFSDKGCKTVFTKLDYYLDD) form an interaction with SYNE3 region.

It belongs to the ClpA/ClpB family. Torsin subfamily. In terms of assembly, homohexamer. Interacts with TOR1B; the interaction may be specific of neural tissues. Interacts (ATP-bound) with TOR1AIP1 and TOR1AIP2; the interactions induce ATPase activity. Interacts with KLHL14; preferentially when ATP-free. Interacts with KLC1 (via TPR repeats); the interaction associates TOR1A with the kinesin oligomeric complex. Interacts with COPS4; the interaction associates TOR1A with the CSN complex. Interacts with SNAPIN; the interaction is direct and associates SNAPIN with the CSN complex. Interacts with STON2. Interacts (ATP-bound) with SYNE3 (via KASH domain); the interaction is required for SYNE3 nuclear envelope localization. Interacts with VIM; the interaction associates TOR1A with the cytoskeleton. Interacts with PLEC. Interacts (ATP-bound) with SLC6A3; regulates SLC6A3 transport to the plasma membrane. In terms of processing, N-glycosylated. Expressed in brain (at protein level).

Its subcellular location is the endoplasmic reticulum lumen. The protein localises to the nucleus inner membrane. It is found in the cell projection. It localises to the growth cone. The protein resides in the cytoplasmic vesicle membrane. Its subcellular location is the cytoplasmic vesicle. The protein localises to the secretory vesicle. It is found in the synaptic vesicle. It catalyses the reaction ATP + H2O = ADP + phosphate + H(+). Protein with chaperone functions important for the control of protein folding, processing, stability and localization as well as for the reduction of misfolded protein aggregates. Involved in the regulation of synaptic vesicle recycling, controls STON2 protein stability in collaboration with the COP9 signalosome complex (CSN). In the nucleus, may link the cytoskeleton with the nuclear envelope, this mechanism seems to be crucial for the control of nuclear polarity, cell movement and, specifically in neurons, nuclear envelope integrity. Participates in the cellular trafficking and may regulate the subcellular location of multipass membrane proteins such as the dopamine transporter SLC6A3, leading to the modulation of dopamine neurotransmission. In the endoplasmic reticulum, plays a role in the quality control of protein folding by increasing clearance of misfolded proteins such as SGCE variants or holding them in an intermediate state for proper refolding. May have a redundant function with TOR1B in non-neural tissues. The protein is Torsin-1A (Tor1a) of Rattus norvegicus (Rat).